We begin with the raw amino-acid sequence, 143 residues long: Nucleoside diphosphate kinase (143 aa).

ATP-binding residues include Lys-11, Phe-59, Arg-87, Thr-93, Arg-104, and Asn-114. The active-site Pros-phosphohistidine intermediate is the His-117.

This sequence belongs to the NDK family. As to quaternary structure, homotetramer. Mg(2+) serves as cofactor.

The protein localises to the cytoplasm. It carries out the reaction a 2'-deoxyribonucleoside 5'-diphosphate + ATP = a 2'-deoxyribonucleoside 5'-triphosphate + ADP. The enzyme catalyses a ribonucleoside 5'-diphosphate + ATP = a ribonucleoside 5'-triphosphate + ADP. Major role in the synthesis of nucleoside triphosphates other than ATP. The ATP gamma phosphate is transferred to the NDP beta phosphate via a ping-pong mechanism, using a phosphorylated active-site intermediate. In Ectopseudomonas mendocina (strain ymp) (Pseudomonas mendocina), this protein is Nucleoside diphosphate kinase.